The following is a 171-amino-acid chain: Peptide deformylase (171 aa).

The Fe cation site is built by Cys-91 and His-133. Residue Glu-134 is part of the active site. His-137 lines the Fe cation pocket.

This sequence belongs to the polypeptide deformylase family. Fe(2+) is required as a cofactor.

The enzyme catalyses N-terminal N-formyl-L-methionyl-[peptide] + H2O = N-terminal L-methionyl-[peptide] + formate. In terms of biological role, removes the formyl group from the N-terminal Met of newly synthesized proteins. Requires at least a dipeptide for an efficient rate of reaction. N-terminal L-methionine is a prerequisite for activity but the enzyme has broad specificity at other positions. This chain is Peptide deformylase, found in Cronobacter sakazakii (strain ATCC BAA-894) (Enterobacter sakazakii).